A 768-amino-acid polypeptide reads, in one-letter code: DNA ligase (768 aa).

Residues 1–11 (MSPSAPANSAP) are compositionally biased toward low complexity. Positions 1 to 28 (MSPSAPANSAPDPDRNGVPDVGPASAAP) are disordered. NAD(+)-binding positions include 62-66 (DAEYD), 111-112 (SI), and Glu148. The active-site N6-AMP-lysine intermediate is Lys150. Residues Arg171, Glu238, Lys361, and Lys385 each coordinate NAD(+). Zn(2+)-binding residues include Cys484, Cys487, Cys502, and Cys508. One can recognise a BRCT domain in the interval 670 to 759 (AAELPLAGKT…EADADADAEG (90 aa)).

The protein belongs to the NAD-dependent DNA ligase family. LigA subfamily. Mg(2+) serves as cofactor. Mn(2+) is required as a cofactor.

It catalyses the reaction NAD(+) + (deoxyribonucleotide)n-3'-hydroxyl + 5'-phospho-(deoxyribonucleotide)m = (deoxyribonucleotide)n+m + AMP + beta-nicotinamide D-nucleotide.. Its function is as follows. DNA ligase that catalyzes the formation of phosphodiester linkages between 5'-phosphoryl and 3'-hydroxyl groups in double-stranded DNA using NAD as a coenzyme and as the energy source for the reaction. It is essential for DNA replication and repair of damaged DNA. The sequence is that of DNA ligase from Leptothrix cholodnii (strain ATCC 51168 / LMG 8142 / SP-6) (Leptothrix discophora (strain SP-6)).